Reading from the N-terminus, the 37-residue chain is Dolichyl-diphosphooligosaccharide--protein glycosyltransferase subunit 4B (37 aa).

Topologically, residues 1-8 are lumenal; it reads MFDDQDLG. The chain crosses the membrane as a helical span at residues 9–29; sequence FFANFLGIFIFVLVMAYHFVM. At 30–37 the chain is on the cytoplasmic side; the sequence is ADVKYEGN.

The protein belongs to the OST4 family. In terms of assembly, component of the oligosaccharyltransferase (OST) complex.

The protein resides in the endoplasmic reticulum membrane. Subunit of the oligosaccharyl transferase (OST) complex that catalyzes the initial transfer of a defined glycan (Glc(3)Man(9)GlcNAc(2) in eukaryotes) from the lipid carrier dolichol-pyrophosphate to an asparagine residue within an Asn-X-Ser/Thr consensus motif in nascent polypeptide chains, the first step in protein N-glycosylation. N-glycosylation occurs cotranslationally and the complex associates with the Sec61 complex at the channel-forming translocon complex that mediates protein translocation across the endoplasmic reticulum (ER). All subunits are required for a maximal enzyme activity. The chain is Dolichyl-diphosphooligosaccharide--protein glycosyltransferase subunit 4B (OST4B) from Oryza sativa subsp. japonica (Rice).